Here is a 312-residue protein sequence, read N- to C-terminus: 4-hydroxy-3-methylbut-2-enyl diphosphate reductase (312 aa).

Position 15 (Cys-15) interacts with [4Fe-4S] cluster. Positions 44 and 77 each coordinate (2E)-4-hydroxy-3-methylbut-2-enyl diphosphate. The dimethylallyl diphosphate site is built by His-44 and His-77. His-44 and His-77 together coordinate isopentenyl diphosphate. Cys-99 contacts [4Fe-4S] cluster. A (2E)-4-hydroxy-3-methylbut-2-enyl diphosphate-binding site is contributed by His-127. His-127 lines the dimethylallyl diphosphate pocket. His-127 is an isopentenyl diphosphate binding site. Glu-129 functions as the Proton donor in the catalytic mechanism. Thr-167 serves as a coordination point for (2E)-4-hydroxy-3-methylbut-2-enyl diphosphate. A [4Fe-4S] cluster-binding site is contributed by Cys-197. The (2E)-4-hydroxy-3-methylbut-2-enyl diphosphate site is built by Ser-225, Ser-226, Asn-227, and Ser-269. Residues Ser-225, Ser-226, Asn-227, and Ser-269 each contribute to the dimethylallyl diphosphate site. Residues Ser-225, Ser-226, Asn-227, and Ser-269 each contribute to the isopentenyl diphosphate site.

The protein belongs to the IspH family. [4Fe-4S] cluster serves as cofactor.

It catalyses the reaction isopentenyl diphosphate + 2 oxidized [2Fe-2S]-[ferredoxin] + H2O = (2E)-4-hydroxy-3-methylbut-2-enyl diphosphate + 2 reduced [2Fe-2S]-[ferredoxin] + 2 H(+). The enzyme catalyses dimethylallyl diphosphate + 2 oxidized [2Fe-2S]-[ferredoxin] + H2O = (2E)-4-hydroxy-3-methylbut-2-enyl diphosphate + 2 reduced [2Fe-2S]-[ferredoxin] + 2 H(+). The protein operates within isoprenoid biosynthesis; dimethylallyl diphosphate biosynthesis; dimethylallyl diphosphate from (2E)-4-hydroxy-3-methylbutenyl diphosphate: step 1/1. It functions in the pathway isoprenoid biosynthesis; isopentenyl diphosphate biosynthesis via DXP pathway; isopentenyl diphosphate from 1-deoxy-D-xylulose 5-phosphate: step 6/6. Its function is as follows. Catalyzes the conversion of 1-hydroxy-2-methyl-2-(E)-butenyl 4-diphosphate (HMBPP) into a mixture of isopentenyl diphosphate (IPP) and dimethylallyl diphosphate (DMAPP). Acts in the terminal step of the DOXP/MEP pathway for isoprenoid precursor biosynthesis. This Aromatoleum aromaticum (strain DSM 19018 / LMG 30748 / EbN1) (Azoarcus sp. (strain EbN1)) protein is 4-hydroxy-3-methylbut-2-enyl diphosphate reductase.